The chain runs to 729 residues: Fatty acid oxidation complex subunit alpha (729 aa).

The segment at 1–189 (MLYKGDTLYL…KIGLVDGVVK (189 aa)) is enoyl-CoA hydratase/isomerase. Residue aspartate 296 participates in substrate binding. The tract at residues 311–729 (ETPKQAAVLG…ARPVGDLKTA (419 aa)) is 3-hydroxyacyl-CoA dehydrogenase. NAD(+)-binding positions include methionine 324, aspartate 343, 400–402 (VVE), lysine 407, and serine 429. Histidine 450 serves as the catalytic For 3-hydroxyacyl-CoA dehydrogenase activity. Asparagine 453 contributes to the NAD(+) binding site. Residues asparagine 500 and tyrosine 660 each contribute to the substrate site. Residues 708–729 (RHNEPYYPPVEPARPVGDLKTA) form a disordered region.

The protein in the N-terminal section; belongs to the enoyl-CoA hydratase/isomerase family. In the C-terminal section; belongs to the 3-hydroxyacyl-CoA dehydrogenase family. Heterotetramer of two alpha chains (FadB) and two beta chains (FadA).

The enzyme catalyses a (3S)-3-hydroxyacyl-CoA + NAD(+) = a 3-oxoacyl-CoA + NADH + H(+). The catalysed reaction is a (3S)-3-hydroxyacyl-CoA = a (2E)-enoyl-CoA + H2O. It carries out the reaction a 4-saturated-(3S)-3-hydroxyacyl-CoA = a (3E)-enoyl-CoA + H2O. It catalyses the reaction (3S)-3-hydroxybutanoyl-CoA = (3R)-3-hydroxybutanoyl-CoA. The enzyme catalyses a (3Z)-enoyl-CoA = a 4-saturated (2E)-enoyl-CoA. The catalysed reaction is a (3E)-enoyl-CoA = a 4-saturated (2E)-enoyl-CoA. It functions in the pathway lipid metabolism; fatty acid beta-oxidation. Its function is as follows. Involved in the aerobic and anaerobic degradation of long-chain fatty acids via beta-oxidation cycle. Catalyzes the formation of 3-oxoacyl-CoA from enoyl-CoA via L-3-hydroxyacyl-CoA. It can also use D-3-hydroxyacyl-CoA and cis-3-enoyl-CoA as substrate. The protein is Fatty acid oxidation complex subunit alpha of Escherichia coli (strain UTI89 / UPEC).